Reading from the N-terminus, the 272-residue chain is Ribosomal RNA large subunit methyltransferase E (272 aa).

S-adenosyl-L-methionine contacts are provided by Gly50, Trp52, Asp68, Asp84, and Asp109. Lys149 (proton acceptor) is an active-site residue. The TRAM domain occupies 196–254 (PLRRGDKFVVDIEKLGSGGDGAVLIEGFVVFVKEVEVGEKVRIKIADVKPNFAFADVEE).

This sequence belongs to the class I-like SAM-binding methyltransferase superfamily. RNA methyltransferase RlmE family.

It is found in the cytoplasm. It catalyses the reaction uridine(2552) in 23S rRNA + S-adenosyl-L-methionine = 2'-O-methyluridine(2552) in 23S rRNA + S-adenosyl-L-homocysteine + H(+). In terms of biological role, specifically methylates the uridine in position 2552 of 23S rRNA at the 2'-O position of the ribose in the fully assembled 50S ribosomal subunit. The protein is Ribosomal RNA large subunit methyltransferase E of Methanosarcina acetivorans (strain ATCC 35395 / DSM 2834 / JCM 12185 / C2A).